The following is a 715-amino-acid chain: Bromodomain-containing protein DDB_G0278469 (715 aa).

2 disordered regions span residues 18–46 (EDNN…NRNA) and 186–425 (QQQK…ETKQ). Low complexity-rich tracts occupy residues 20–45 (NNNN…PNRN), 186–204 (QQQK…PTAQ), 215–227 (LTAA…TTTT), 234–254 (TAPP…TTKK), and 261–281 (SKSN…TTIT). A compositionally biased stretch (basic and acidic residues) spans 307-316 (KPKEQKKDIM). The stretch at 322–368 (SKKANTHEEKEEGESEEEEEEEEEEEEEEEEEEEEEQLEDKQKQTKT) forms a coiled coil. Residues 332-359 (EEGESEEEEEEEEEEEEEEEEEEEEEQL) show a composition bias toward acidic residues. The segment covering 366 to 389 (TKTPISQNKSASSNIKPLSKTSKS) has biased composition (polar residues). Residues 405–414 (KKITSTTVTR) show a composition bias toward low complexity. The stretch at 437 to 470 (KQQTQEEIEQELKLESIRKRIEQFINKFEKEIND) forms a coiled coil. Residues 474-599 (KDLDEGKRKI…IQFYKSLLET (126 aa)) enclose the Bromo domain. The tract at residues 653–715 (LVDEDEDECL…SEEEDQEATN (63 aa)) is disordered. Positions 662–672 (LNNQNNPTTYD) are enriched in polar residues. Over residues 684-715 (QESDEESDEESDEESDEERDQLSEEEDQEATN) the composition is skewed to acidic residues.

This chain is Bromodomain-containing protein DDB_G0278469, found in Dictyostelium discoideum (Social amoeba).